The primary structure comprises 988 residues: Centrosomal protein of 120 kDa (988 aa).

The 112-residue stretch at 1–112 (MVPKSDQLLI…QETKQAPKWY (112 aa)) folds into the C2 1 domain. Positions 354–425 (QNGHEAEHSQ…KPTVKGIGSV (72 aa)) are disordered. Positions 384-394 (SPAPPPPPNQT) are enriched in pro residues. One can recognise a C2 2 domain in the interval 435 to 569 (TCGASEVVTS…LSSEKTRFLG (135 aa)). The segment at 624 to 644 (GVPAVDQKPSSPPPAPCPSEI) is disordered. Residues 706–929 (AEYSILEGKL…QYQDCKEIAS (224 aa)) are a coiled coil. S934 and S938 each carry phosphoserine.

This sequence belongs to the CEP120 family. Interacts with TACC2, TACC3, CCDC52, TALPID3. As to expression, ubiquitous. Highly expressed in brain, lung and kidney and weakly expressed in heart, liver, small intestine and limb (at protein level). Expressed in brain.

It localises to the cytoplasm. It is found in the cytoskeleton. Its subcellular location is the microtubule organizing center. The protein resides in the centrosome. In terms of biological role, plays a role in the microtubule-dependent coupling of the nucleus and the centrosome. Involved in the processes that regulate centrosome-mediated interkinetic nuclear migration (INM) of neural progenitors and for proper positioning of neurons during brain development. Also implicated in the migration and selfrenewal of neural progenitors. Required for centriole duplication and maturation during mitosis and subsequent ciliogenesis. Required for the recruitment of CEP295 to the proximal end of new-born centrioles at the centriolar microtubule wall during early S phase in a PLK4-dependent manner. This Mus musculus (Mouse) protein is Centrosomal protein of 120 kDa (Cep120).